The chain runs to 347 residues: NADH-ubiquinone oxidoreductase chain 2 (347 aa).

10 consecutive transmembrane segments (helical) span residues Met-1 to Ala-21, His-25 to Met-45, Tyr-59 to Val-79, Phe-111 to Leu-131, Ile-149 to Gly-169, Ile-178 to Pro-198, Thr-201 to Leu-221, Met-237 to Leu-257, Val-276 to Leu-296, and Leu-326 to Leu-346.

It belongs to the complex I subunit 2 family. As to quaternary structure, core subunit of respiratory chain NADH dehydrogenase (Complex I) which is composed of 45 different subunits. Interacts with TMEM242.

It is found in the mitochondrion inner membrane. The catalysed reaction is a ubiquinone + NADH + 5 H(+)(in) = a ubiquinol + NAD(+) + 4 H(+)(out). Functionally, core subunit of the mitochondrial membrane respiratory chain NADH dehydrogenase (Complex I) which catalyzes electron transfer from NADH through the respiratory chain, using ubiquinone as an electron acceptor. Essential for the catalytic activity and assembly of complex I. This Pteropus pumilus (Little golden-mantled flying fox) protein is NADH-ubiquinone oxidoreductase chain 2.